A 200-amino-acid chain; its full sequence is LHFPL tetraspan subfamily member 6 protein (200 aa).

An N-terminal signal peptide occupies residues 1–23; sequence MASSLTCTGVIWALLSFLSAATS. Helical transmembrane passes span 84–104, 123–143, and 166–186; these read ICTIVTGLGCGLLLLVALTAL, GIQFLGGLLIGAGCALYPLGW, and IGWAYYCTGAGAAAAMLLCTW.

Belongs to the LHFP family.

It localises to the membrane. The polypeptide is LHFPL tetraspan subfamily member 6 protein (Rattus norvegicus (Rat)).